The sequence spans 215 residues: Protein-L-isoaspartate O-methyltransferase 1 (215 aa).

Ser61 is an active-site residue.

This sequence belongs to the methyltransferase superfamily. L-isoaspartyl/D-aspartyl protein methyltransferase family.

It is found in the cytoplasm. It carries out the reaction [protein]-L-isoaspartate + S-adenosyl-L-methionine = [protein]-L-isoaspartate alpha-methyl ester + S-adenosyl-L-homocysteine. Functionally, catalyzes the methyl esterification of L-isoaspartyl residues in peptides and proteins that result from spontaneous decomposition of normal L-aspartyl and L-asparaginyl residues. It plays a role in the repair and/or degradation of damaged proteins. The chain is Protein-L-isoaspartate O-methyltransferase 1 from Pelobacter propionicus (strain DSM 2379 / NBRC 103807 / OttBd1).